Reading from the N-terminus, the 874-residue chain is Dynein regulatory complex subunit 7 (874 aa).

The interval 1–20 is disordered; that stretch reads MEVLREKVEEEEEAEREEAA. Coiled-coil stretches lie at residues 1 to 67 and 257 to 297; these read MEVL…SAEL and RFEQ…DALH. The segment covering 386-400 has biased composition (acidic residues); it reads TEEDDSGINDEDDVE. Residues 386–410 are disordered; that stretch reads TEEDDSGINDEDDVENLGKEDEDKS. A compositionally biased stretch (basic and acidic residues) spans 401-410; sequence NLGKEDEDKS.

The protein belongs to the DRC7 family. In terms of assembly, component of the nexin-dynein regulatory complex (N-DRC). Interacts with TCTE1/DRC5. Interacts with DRC3 and GAS8/DRC4. Expressed in the testis.

It localises to the cell projection. It is found in the cilium. The protein resides in the flagellum. The protein localises to the cytoplasm. Its subcellular location is the cytoskeleton. It localises to the cilium axoneme. It is found in the flagellum axoneme. Component of the nexin-dynein regulatory complex (N-DRC) a key regulator of ciliary/flagellar motility which maintains the alignment and integrity of the distal axoneme and regulates microtubule sliding in motile axonemes. Involved in the regulation of flagellar motility. Essential for male fertility, sperm head morphogenesis and sperm flagellum formation. This chain is Dynein regulatory complex subunit 7 (DRC7), found in Pan troglodytes (Chimpanzee).